Here is a 194-residue protein sequence, read N- to C-terminus: tRNA (pseudouridine(54)-N(1))-methyltransferase (194 aa).

Leucine 125 is a binding site for S-adenosyl-L-methionine.

Belongs to the methyltransferase superfamily. TrmY family. In terms of assembly, homodimer.

The protein localises to the cytoplasm. It carries out the reaction pseudouridine(54) in tRNA + S-adenosyl-L-methionine = N(1)-methylpseudouridine(54) in tRNA + S-adenosyl-L-homocysteine + H(+). In terms of biological role, specifically catalyzes the N1-methylation of pseudouridine at position 54 (Psi54) in tRNAs. In Methanospirillum hungatei JF-1 (strain ATCC 27890 / DSM 864 / NBRC 100397 / JF-1), this protein is tRNA (pseudouridine(54)-N(1))-methyltransferase.